The sequence spans 619 residues: Cationic amino acid transporter 3 (619 aa).

At 1 to 36 (MPWQAFRRFGQKLVRRRTLESGMAETRLARCLSTLD) the chain is on the cytoplasmic side. The chain crosses the membrane as a helical span at residues 37-57 (LVALGVGSTLGAGVYVLAGEV). Topologically, residues 58 to 61 (AKDK) are extracellular. Residues 62 to 82 (AGPSIVICFLVAALSSVLAGL) form a helical membrane-spanning segment. At 83–107 (CYAEFGARVPRSGSAYLYSYVTVGE) the chain is on the cytoplasmic side. The helical transmembrane segment at 108 to 128 (LWAFTTGWNLILSYVIGTASV) threads the bilayer. The Extracellular segment spans residues 129 to 162 (ARAWSSAFDNLIGNHISKTLQGSIALHVPHVLAE). A helical membrane pass occupies residues 163–183 (YPDFFALGLVLLLTGLLALGA). Residues 184-191 (SESALVTK) are Cytoplasmic-facing. The helical transmembrane segment at 192-212 (VFTGVNLLVLGFVMISGFVKG) threads the bilayer. The Extracellular segment spans residues 213–233 (DVHNWKLTEEDYELAMAELND). N-linked (GlcNAc...) asparagine glycosylation occurs at Asn-232. The chain crosses the membrane as a helical span at residues 234–254 (TYSLGPLGSGGFVPFGFEGIL). Residues 255–285 (RGAATCFYAFVGFDCIATTGEEAQNPQRSIP) lie on the Cytoplasmic side of the membrane. Residues 286 to 306 (MGIVISLSVCFLAYFAVSSAL) form a helical membrane-spanning segment. Topologically, residues 307-335 (TLMMPYYQLQPESPLPEAFLYIGWAPARY) are extracellular. The chain crosses the membrane as a helical span at residues 336–356 (VVAVGSLCALSTSLLGSMFPM). The Cytoplasmic portion of the chain corresponds to 357–382 (PRVIYAMAEDGLLFRVLARIHTGTRT). A helical membrane pass occupies residues 383–403 (PIIATVVSGIIAAFMAFLFKL). The Extracellular portion of the chain corresponds to 404–406 (TDL). Residues 407–427 (VDLMSIGTLLAYSLVSICVLI) traverse the membrane as a helical segment. At 428-475 (LRYQPDQETKTGEEVELQEEAITTESEKLTLWGLFFPLNSIPTPLSGQ) the chain is on the cytoplasmic side. A helical membrane pass occupies residues 476–496 (IVYVCSSLLAVLLTALCLVLA). The Extracellular segment spans residues 497–506 (QWSVPLLSGD). The helical transmembrane segment at 507-527 (LLWTAVVVLLLLLIIGIIVVI) threads the bilayer. Topologically, residues 528–540 (WRQPQSSTPLHFK) are cytoplasmic. A helical membrane pass occupies residues 541–561 (VPALPLLPLMSIFVNIYLMMQ). Topologically, residues 562–569 (MTAGTWAR) are extracellular. Residues 570–590 (FGVWMLIGFAIYFGYGIQHSL) traverse the membrane as a helical segment. At 591–619 (EEIKSNQPSRKSRAKTVDLDPGTLYVHSV) the chain is on the cytoplasmic side. Phosphothreonine is present on Thr-606. Ser-618 bears the Phosphoserine mark.

Belongs to the amino acid-polyamine-organocation (APC) superfamily. Cationic amino acid transporter (CAT) (TC 2.A.3.3) family. In terms of processing, N-glycosylated. As to expression, highly expressed in thymus, uterus and testis. Detected at lower levels in brain, mammary gland, prostate, salivary gland and fetal spleen. In brain, highest expression in thalamus, hippocampus and amygdala.

It is found in the cell membrane. The enzyme catalyses L-arginine(in) = L-arginine(out). It catalyses the reaction L-lysine(in) = L-lysine(out). The catalysed reaction is L-ornithine(in) = L-ornithine(out). Its function is as follows. Uniporter that mediates the uptake of cationic L-amino acids such as L-arginine, L-lysine and L-ornithine. The transport is sodium ions- and pH-independent, moderately trans-stimulated and is mediated by passive diffusion. The sequence is that of Cationic amino acid transporter 3 from Homo sapiens (Human).